Reading from the N-terminus, the 108-residue chain is Thioredoxin (108 aa).

The region spanning 2-108 (GKYFEATDKN…IAKKIDEHIG (107 aa)) is the Thioredoxin domain. Cysteines 32 and 35 form a disulfide.

This sequence belongs to the thioredoxin family.

In terms of biological role, participates in various redox reactions through the reversible oxidation of its active center dithiol to a disulfide and catalyzes dithiol-disulfide exchange reactions. In Chlorobaculum thiosulfatiphilum (Chlorobium limicola f.sp. thiosulfatophilum), this protein is Thioredoxin (trxA).